The primary structure comprises 493 residues: Maintenance of mitochondrial morphology protein 1 (493 aa).

Residues 1–23 (MSQHSQYGVPGVPAQSSLSFTQG) are Lumenal-facing. The chain crosses the membrane as a helical span at residues 24 to 44 (FLLGQLSVVLLIGAFIKFFIF). The Cytoplasmic portion of the chain corresponds to 45–493 (GEAPAPPSRG…GSMPRVVRTP (449 aa)). Positions 52 to 104 (SRGLASRTASHHRSYSINQGDNNANNNTNNGSSPRTLREKPSTSNVLRPVPSS) are disordered. The segment covering 69–81 (NQGDNNANNNTNN) has biased composition (low complexity). The segment covering 93–104 (STSNVLRPVPSS) has biased composition (polar residues). The region spanning 140-391 (QPESLDWFNV…EPRVQVVGLP (252 aa)) is the SMP-LTD domain. A disordered region spans residues 420-493 (SSRSGGGPVE…GSMPRVVRTP (74 aa)).

The protein belongs to the MMM1 family. As to quaternary structure, homodimer. Component of the ER-mitochondria encounter structure (ERMES) or MDM complex, composed of mmm1, mdm10, mdm12 and mdm34. A mmm1 homodimer associates with one molecule of mdm12 on each side in a pairwise head-to-tail manner, and the SMP-LTD domains of mmm1 and mdm12 generate a continuous hydrophobic tunnel for phospholipid trafficking.

Its subcellular location is the endoplasmic reticulum membrane. Functionally, component of the ERMES/MDM complex, which serves as a molecular tether to connect the endoplasmic reticulum (ER) and mitochondria. Components of this complex are involved in the control of mitochondrial shape and protein biogenesis, and function in nonvesicular lipid trafficking between the ER and mitochondria. The mdm12-mmm1 subcomplex functions in the major beta-barrel assembly pathway that is responsible for biogenesis of all outer membrane beta-barrel proteins, and acts in a late step after the SAM complex. The mdm10-mdm12-mmm1 subcomplex further acts in the TOM40-specific pathway after the action of the mdm12-mmm1 complex. Essential for establishing and maintaining the structure of mitochondria and maintenance of mtDNA nucleoids. The sequence is that of Maintenance of mitochondrial morphology protein 1 from Talaromyces stipitatus (strain ATCC 10500 / CBS 375.48 / QM 6759 / NRRL 1006) (Penicillium stipitatum).